A 106-amino-acid polypeptide reads, in one-letter code: Urease subunit beta (106 aa).

Belongs to the urease beta subunit family. As to quaternary structure, heterotrimer of UreA (gamma), UreB (beta) and UreC (alpha) subunits. Three heterotrimers associate to form the active enzyme.

It is found in the cytoplasm. The catalysed reaction is urea + 2 H2O + H(+) = hydrogencarbonate + 2 NH4(+). It functions in the pathway nitrogen metabolism; urea degradation; CO(2) and NH(3) from urea (urease route): step 1/1. The sequence is that of Urease subunit beta from Synechococcus sp. (strain CC9311).